Here is a 220-residue protein sequence, read N- to C-terminus: Cell division protein SepF (220 aa).

The interval 33 to 82 (GAARGYARRPREDRFEEEGYIDRAGREYDDRPAPREYDEPPIYRGGYDEP) is disordered. The span at 52 to 70 (YIDRAGREYDDRPAPREYD) shows a compositional bias: basic and acidic residues.

This sequence belongs to the SepF family. As to quaternary structure, homodimer. Interacts with FtsZ.

Its subcellular location is the cytoplasm. Functionally, cell division protein that is part of the divisome complex and is recruited early to the Z-ring. Probably stimulates Z-ring formation, perhaps through the cross-linking of FtsZ protofilaments. Its function overlaps with FtsA. The sequence is that of Cell division protein SepF from Mycobacterium sp. (strain JLS).